Reading from the N-terminus, the 206-residue chain is mRNA-decapping protein D9 (206 aa).

The Nudix hydrolase domain occupies 23–206 (KKTHVFAICV…FIYNTLLYSK (184 aa)). Residues 104-125 (GKLNKSETIDDCIRREIKEETD) carry the Nudix box motif. E110 contacts Mg(2+). E119 serves as the catalytic Nucleophile. Residues E123 and D144 each contribute to the Mg(2+) site.

This sequence belongs to the Nudix hydrolase family. Requires Mg(2+) as cofactor. It depends on Mn(2+) as a cofactor.

Its function is as follows. Decapping enzyme required for the removal of the 5'-end m7GpppN cap tethered to viral and host mRNAs to allow their decay in cells. May therefore accelerate viral and cellular mRNA turnover to eliminate competing host mRNAs and allow stage-specific synthesis of viral proteins. Acceleration of the turnover of cellular transcripts may even promote the shutoff of host protein synthesis. Does not cleave unmethylated RNAs or RNAs shorter than 24 nucleotides. The sequence is that of mRNA-decapping protein D9 from Oryctolagus cuniculus (Rabbit).